The primary structure comprises 311 residues: Solute carrier family 25 member 36-A (311 aa).

Solcar repeat units follow at residues 4-108 (RDTL…SKEK), 116-203 (DSTQ…IKRK), and 224-308 (SDFV…VVYL). 6 consecutive transmembrane segments (helical) span residues 7-27 (LVHLFAGGCGGTVGAILTCPL), 41-57 (FYISEVQLSTVNGASVA), 111-131 (NVFDPDSTQVHMLSAGLAGFT), 180-200 (MSASYAGISETVIHFVIYESI), 226-246 (FVGMMLAAATSKTCATSIAYP), and 291-311 (QIPNTAIMMCTYELVVYLLNG).

It belongs to the mitochondrial carrier (TC 2.A.29) family.

It localises to the mitochondrion inner membrane. This Danio rerio (Zebrafish) protein is Solute carrier family 25 member 36-A (slc25a36a).